The chain runs to 215 residues: MKLVFLGPPGSGKGTIAKILSNELNYYHISTGDLFRTNIENDTPLGKEIKQIVENGQLVPDSITIKVVEDKINTIDNRDNFILDGFPRNINQAIELDRLLENIKIINFLINEKLLVKRLSGRRICQSCCKIFNIYTLPTKEKEICDFCQGILYQRKDDTKESLKIRLQEYNLQTKPLINFYSNSNRLNNIDASKNINEVQKNLMEIISKIEKKLV.

10-15 (GSGKGT) contacts ATP. The tract at residues 30–59 (STGDLFRTNIENDTPLGKEIKQIVENGQLV) is NMP. AMP contacts are provided by residues threonine 31, arginine 36, 57–59 (QLV), 85–88 (GFPR), and glutamine 92. Positions 121 to 158 (GRRICQSCCKIFNIYTLPTKEKEICDFCQGILYQRKDD) are LID. Arginine 122 is a binding site for ATP. Residues cysteine 125 and cysteine 128 each coordinate Zn(2+). 131–132 (IF) serves as a coordination point for ATP. Zn(2+) contacts are provided by cysteine 145 and cysteine 148. Residues arginine 155 and arginine 166 each contribute to the AMP site. Lysine 194 contacts ATP.

The protein belongs to the adenylate kinase family. In terms of assembly, monomer.

The protein localises to the cytoplasm. It catalyses the reaction AMP + ATP = 2 ADP. It functions in the pathway purine metabolism; AMP biosynthesis via salvage pathway; AMP from ADP: step 1/1. Its function is as follows. Catalyzes the reversible transfer of the terminal phosphate group between ATP and AMP. Plays an important role in cellular energy homeostasis and in adenine nucleotide metabolism. In Borrelia recurrentis (strain A1), this protein is Adenylate kinase.